The sequence spans 491 residues: Inositol-pentakisphosphate 2-kinase (491 aa).

The short motif at 136–140 is the EXKPK motif element; it reads EIKPK. Phosphoserine is present on Ser282.

The protein belongs to the IPK1 type 2 family. Ubiquitously expressed, with high expression in heart, brain, testis and placenta.

It localises to the cytoplasm. It is found in the nucleus. It catalyses the reaction 1D-myo-inositol 1,3,4,5,6-pentakisphosphate + ATP = 1D-myo-inositol hexakisphosphate + ADP + H(+). Phosphorylates Ins(1,3,4,5,6)P5 at position 2 to form Ins(1,2,3,4,5,6)P6 (InsP6 or phytate). InsP6 is involved in many processes such as mRNA export, non-homologous end-joining, endocytosis, ion channel regulation. It also protects cells from TNF-alpha-induced apoptosis. This chain is Inositol-pentakisphosphate 2-kinase (IPPK), found in Homo sapiens (Human).